Consider the following 304-residue polypeptide: MSPSTSIEALDQPVKPVVFRPLTLRRRIKNSVATTFFFTSFVVALIPLVWLLWVVIARGWFAVTRSGWWTHSLRGVLPEQFAGGVYHALYGTLVQAGVAAVLAVPLGLMTAVYLVEYGTGRMSRVTTFTVDVLAGVPSIVAALFVFSLWIATLGFQQSAFAVALALVLLMLPVVVRAGEEMLRLVPDELREASYALGVPKWKTIVRIVAPIAMPGIVSGILLSIARVVGETAPVLVLVGYSHSINLDVFHGNMASLPLLIYTELTNPEHAGFLRVWGAALTLIIVVATINLAAAMIRFVATRRR.

Helical transmembrane passes span 36–56, 96–116, 132–152, 155–175, 204–224, and 276–296; these read FFFT…WVVI, AGVA…YLVE, VLAG…WIAT, FQQS…PVVV, IVRI…LLSI, and WGAA…AAMI. The ABC transmembrane type-1 domain maps to 89–297; the sequence is LYGTLVQAGV…TINLAAAMIR (209 aa).

Belongs to the binding-protein-dependent transport system permease family. CysTW subfamily.

Its subcellular location is the cell membrane. In terms of biological role, part of the binding-protein-dependent transport system for phosphate; probably responsible for the translocation of the substrate across the membrane. This is Phosphate transport system permease protein PstA 1 (pstA1) from Mycobacterium tuberculosis (strain CDC 1551 / Oshkosh).